Reading from the N-terminus, the 179-residue chain is ATP-dependent protease subunit HslV (179 aa).

Residue Thr-7 is part of the active site. 3 residues coordinate Na(+): Gly-162, Cys-165, and Thr-168.

Belongs to the peptidase T1B family. HslV subfamily. In terms of assembly, a double ring-shaped homohexamer of HslV is capped on each side by a ring-shaped HslU homohexamer. The assembly of the HslU/HslV complex is dependent on binding of ATP.

It localises to the cytoplasm. The catalysed reaction is ATP-dependent cleavage of peptide bonds with broad specificity.. Allosterically activated by HslU binding. In terms of biological role, protease subunit of a proteasome-like degradation complex believed to be a general protein degrading machinery. The protein is ATP-dependent protease subunit HslV of Saccharophagus degradans (strain 2-40 / ATCC 43961 / DSM 17024).